The chain runs to 209 residues: Uracil phosphoribosyltransferase (209 aa).

Residues Arg-79, Arg-104, and 131 to 139 each bind 5-phospho-alpha-D-ribose 1-diphosphate; that span reads DPMLATGGT. Residues Ile-194 and 199-201 each bind uracil; that span reads GDA. Asp-200 serves as a coordination point for 5-phospho-alpha-D-ribose 1-diphosphate.

This sequence belongs to the UPRTase family. The cofactor is Mg(2+).

The enzyme catalyses UMP + diphosphate = 5-phospho-alpha-D-ribose 1-diphosphate + uracil. It functions in the pathway pyrimidine metabolism; UMP biosynthesis via salvage pathway; UMP from uracil: step 1/1. With respect to regulation, allosterically activated by GTP. Catalyzes the conversion of uracil and 5-phospho-alpha-D-ribose 1-diphosphate (PRPP) to UMP and diphosphate. This chain is Uracil phosphoribosyltransferase, found in Pseudoalteromonas atlantica (strain T6c / ATCC BAA-1087).